The following is a 332-amino-acid chain: Tetraacyldisaccharide 4'-kinase (332 aa).

An ATP-binding site is contributed by 52–59; that stretch reads TLGGAGKT.

This sequence belongs to the LpxK family.

The enzyme catalyses a lipid A disaccharide + ATP = a lipid IVA + ADP + H(+). The protein operates within glycolipid biosynthesis; lipid IV(A) biosynthesis; lipid IV(A) from (3R)-3-hydroxytetradecanoyl-[acyl-carrier-protein] and UDP-N-acetyl-alpha-D-glucosamine: step 6/6. In terms of biological role, transfers the gamma-phosphate of ATP to the 4'-position of a tetraacyldisaccharide 1-phosphate intermediate (termed DS-1-P) to form tetraacyldisaccharide 1,4'-bis-phosphate (lipid IVA). This chain is Tetraacyldisaccharide 4'-kinase, found in Methylobacterium sp. (strain 4-46).